Consider the following 563-residue polypeptide: PHD finger protein EHD3 (563 aa).

The tract at residues 1–46 is disordered; that stretch reads MGSQNRPPPPRKRQPPPPEDHLVTYKRRRSKETQPLPLMANGANSK. PHD-type zinc fingers lie at residues 296-348, 420-472, and 474-524; these read LCPC…CSFK, SNLC…CWYC, and SCLC…CKIR.

Interacts with TRX1. In terms of tissue distribution, expressed in shoot apical meristem and leaves.

The protein resides in the nucleus. Functionally, probable transcription factor involved in the regulation of floral induction under long day (LD) conditions. Promotes photoperiodic flowering by repressing GHD7, a major floral repressor. Seems to function independently of HD1. The chain is PHD finger protein EHD3 from Oryza sativa subsp. japonica (Rice).